Here is a 177-residue protein sequence, read N- to C-terminus: MDLSKIAVGVNPPYDLNAIIEIPQGGEPVKYEIDKESGALMVDRFLHTAMFYPANYGFIPHTLADDGDPADIMVVGPTPVVPGAIIRCRPIGTLMMVDEAGSDEKILAVPVDKLHPFYTGVTSWRDLPTILTEQIAHFFQHYKDLEKGKSTKISGWADPDETAEIIRTAIKRYNESY.

Substrate-binding residues include lysine 30, arginine 44, and tyrosine 56. The Mg(2+) site is built by aspartate 66, aspartate 71, and aspartate 103. Substrate is bound at residue tyrosine 142.

It belongs to the PPase family. As to quaternary structure, homohexamer. It depends on Mg(2+) as a cofactor.

The protein localises to the cytoplasm. The catalysed reaction is diphosphate + H2O = 2 phosphate + H(+). In terms of biological role, catalyzes the hydrolysis of inorganic pyrophosphate (PPi) forming two phosphate ions. The chain is Inorganic pyrophosphatase from Caulobacter vibrioides (strain ATCC 19089 / CIP 103742 / CB 15) (Caulobacter crescentus).